The following is a 242-amino-acid chain: Small ribosomal subunit protein uS3 (242 aa).

Positions 39-110 constitute a KH type-2 domain; the sequence is IRRFIHKKYG…QVRINVVEVE (72 aa). The segment at 217–242 is disordered; it reads TMPVGASPRRRGNRRPQQFEDRSNEG. The span at 233–242 shows a compositional bias: basic and acidic residues; it reads QQFEDRSNEG.

Belongs to the universal ribosomal protein uS3 family. In terms of assembly, part of the 30S ribosomal subunit. Forms a tight complex with proteins S10 and S14.

In terms of biological role, binds the lower part of the 30S subunit head. Binds mRNA in the 70S ribosome, positioning it for translation. In Prochlorococcus marinus (strain MIT 9313), this protein is Small ribosomal subunit protein uS3.